Here is a 342-residue protein sequence, read N- to C-terminus: MTSLTLALDAMGGDHGPHVTVPAALRALQLHSFLQIILVGDKTEIDVYLRQADPQLLSRIEVIHTDEVVSMSDRPVHALRTRKNSSMRLAIELVRDARASACVSAGNTGALMAMAKVLLKTLPGIDRPALVSCLPAVTQKPVYLLDLGANVSCDSETLFQFAVMGSVLCEAVDKKSRPKVALLNVGVEEIKGNDQVQQAAQLLQHTEQINYTGFIEGDEIYSGNVDVIVCDGFVGNITLKTSEGIAKLLVHQLKRGLTQGLFVRFLAKLIAPRIQAVLSQMNPDHYNGASLLGLRGIVVKSHGNADETAYLQAISLAVTEAQRRLPEMIKDRLESILLDINN.

The protein belongs to the PlsX family. Homodimer. Probably interacts with PlsY.

Its subcellular location is the cytoplasm. The catalysed reaction is a fatty acyl-[ACP] + phosphate = an acyl phosphate + holo-[ACP]. It participates in lipid metabolism; phospholipid metabolism. Functionally, catalyzes the reversible formation of acyl-phosphate (acyl-PO(4)) from acyl-[acyl-carrier-protein] (acyl-ACP). This enzyme utilizes acyl-ACP as fatty acyl donor, but not acyl-CoA. The sequence is that of Phosphate acyltransferase from Shewanella putrefaciens (strain CN-32 / ATCC BAA-453).